The following is a 208-amino-acid chain: Ribosome maturation factor RimM (208 aa).

One can recognise a PRC barrel domain in the interval 98-205; sequence ADEFYVPDLI…IIEITPPDGL (108 aa). The tract at residues 154–174 is disordered; the sequence is LPSKSKRSRDTKNQKKNQSPP.

This sequence belongs to the RimM family. As to quaternary structure, binds ribosomal protein uS19.

It localises to the cytoplasm. Its function is as follows. An accessory protein needed during the final step in the assembly of 30S ribosomal subunit, possibly for assembly of the head region. Essential for efficient processing of 16S rRNA. May be needed both before and after RbfA during the maturation of 16S rRNA. It has affinity for free ribosomal 30S subunits but not for 70S ribosomes. This Trichodesmium erythraeum (strain IMS101) protein is Ribosome maturation factor RimM.